A 410-amino-acid polypeptide reads, in one-letter code: Na(+)/H(+) antiporter NhaS4 (410 aa).

A run of 11 helical transmembrane segments spans residues 7–27 (LLILANIIVIIGLARLIGLLF), 33–53 (PPVIGEIIAGIMLGPSLLGLL), 69–89 (FLYLLSEIGLIFYMFLVGLEL), 107–127 (VSIFFPFVLGIVLSFFVLYSL), 135–155 (FIPFALFIGAAMSITAFPVLA), 173–193 (LTCASVDDISAWCLLAIAIAV), 199–219 (IFGAFPTLLGIIVYTVFMVTL), 241–261 (LLTFIYIMVILSAMLTEWIGI), 291–311 (FVSTFLLPIFFAYSGLSTDLG), 319–339 (WAVCALVVAAAIAGKYCGVYV), and 376–396 (GVISPVIFTMFVIMAIITTII).

This sequence belongs to the monovalent cation:proton antiporter 2 (CPA2) transporter (TC 2.A.37) family.

It is found in the membrane. In terms of biological role, na(+)/H(+) antiporter. The protein is Na(+)/H(+) antiporter NhaS4 (nhaS4) of Synechocystis sp. (strain ATCC 27184 / PCC 6803 / Kazusa).